The sequence spans 291 residues: Oxidative stress-responsive serine-rich protein 1 (291 aa).

Residues 44-139 (RTTVDDTKPK…STGENSTSLD (96 aa)) are disordered. Over residues 65–83 (STRKSSRGAVRIQRRRRSK) the composition is skewed to basic residues. Composition is skewed to polar residues over residues 95 to 113 (CSTT…SQTE) and 127 to 139 (KEFS…TSLD). Residue Thr-143 is modified to Phosphothreonine.

Ubiquitous with high level in testis, placenta and cardiac myocytes. As to expression, expressed in testis, unpreganant uterus and cardiac myocytes.

The chain is Oxidative stress-responsive serine-rich protein 1 (Oser1) from Rattus norvegicus (Rat).